A 129-amino-acid polypeptide reads, in one-letter code: Small ribosomal subunit protein uS8mz (129 aa).

This sequence belongs to the universal ribosomal protein uS8 family. As to quaternary structure, component of the mitochondrial ribosome small subunit.

It is found in the mitochondrion. In Arabidopsis thaliana (Mouse-ear cress), this protein is Small ribosomal subunit protein uS8mz (RPS15AB).